The sequence spans 172 residues: Protein GrpE (172 aa).

Belongs to the GrpE family. In terms of assembly, homodimer.

Its subcellular location is the cytoplasm. In terms of biological role, participates actively in the response to hyperosmotic and heat shock by preventing the aggregation of stress-denatured proteins, in association with DnaK and GrpE. It is the nucleotide exchange factor for DnaK and may function as a thermosensor. Unfolded proteins bind initially to DnaJ; upon interaction with the DnaJ-bound protein, DnaK hydrolyzes its bound ATP, resulting in the formation of a stable complex. GrpE releases ADP from DnaK; ATP binding to DnaK triggers the release of the substrate protein, thus completing the reaction cycle. Several rounds of ATP-dependent interactions between DnaJ, DnaK and GrpE are required for fully efficient folding. In Thermotoga maritima (strain ATCC 43589 / DSM 3109 / JCM 10099 / NBRC 100826 / MSB8), this protein is Protein GrpE.